A 110-amino-acid polypeptide reads, in one-letter code: UPF0060 membrane protein Rpal_4363 (110 aa).

4 helical membrane passes run 4 to 24 (LLTF…FWAW), 31 to 51 (PLWL…LTLA), 59 to 79 (AYAA…WAIE), and 88 to 108 (VIGA…PRAL).

This sequence belongs to the UPF0060 family.

Its subcellular location is the cell inner membrane. The protein is UPF0060 membrane protein Rpal_4363 of Rhodopseudomonas palustris (strain TIE-1).